The primary structure comprises 277 residues: Large ribosomal subunit protein uL2 (277 aa).

Positions 215-263 are disordered; that stretch reads LGRKPHQRGSAMNPVDHPHGGGEGRTGAGRVPVSPWGQPAKGLKTRKKR.

Belongs to the universal ribosomal protein uL2 family. As to quaternary structure, part of the 50S ribosomal subunit. Forms a bridge to the 30S subunit in the 70S ribosome.

One of the primary rRNA binding proteins. Required for association of the 30S and 50S subunits to form the 70S ribosome, for tRNA binding and peptide bond formation. It has been suggested to have peptidyltransferase activity; this is somewhat controversial. Makes several contacts with the 16S rRNA in the 70S ribosome. The polypeptide is Large ribosomal subunit protein uL2 (Deinococcus geothermalis (strain DSM 11300 / CIP 105573 / AG-3a)).